A 449-amino-acid polypeptide reads, in one-letter code: Putative F-box/FBD/LRR-repeat protein At5g62970 (449 aa).

The 49-residue stretch at 2-50 (DKISGFSDDELLVKILSFLPFKFAITTSVLSKQWKFLWMRVPKLEYDED) folds into the F-box domain. LRR repeat units lie at residues 27–52 (TTSV…EDSM), 81–107 (GHRM…RLKF), 158–185 (TLKL…HLER), 186–211 (VTYG…VVEL), 252–279 (YFKL…NITA), and 328–354 (IHNA…EFDE). The FBD domain maps to 368 to 418 (FWNQPNSVPQCLLSTLQTFEWSGYPGSVQGKDLATYILRKSRQLKIATISI).

This is Putative F-box/FBD/LRR-repeat protein At5g62970 from Arabidopsis thaliana (Mouse-ear cress).